We begin with the raw amino-acid sequence, 271 residues long: Pyrroline-5-carboxylate reductase (271 aa).

It belongs to the pyrroline-5-carboxylate reductase family.

The protein resides in the cytoplasm. It carries out the reaction L-proline + NADP(+) = (S)-1-pyrroline-5-carboxylate + NADPH + 2 H(+). The enzyme catalyses L-proline + NAD(+) = (S)-1-pyrroline-5-carboxylate + NADH + 2 H(+). It participates in amino-acid biosynthesis; L-proline biosynthesis; L-proline from L-glutamate 5-semialdehyde: step 1/1. In terms of biological role, catalyzes the reduction of 1-pyrroline-5-carboxylate (PCA) to L-proline. This chain is Pyrroline-5-carboxylate reductase, found in Staphylococcus aureus (strain COL).